A 193-amino-acid polypeptide reads, in one-letter code: C-type lectin domain family 3 member A homolog (193 aa).

A signal peptide spans 1-24; that stretch reads MAQAGLLIWLFFTILLLDLTCTQS. Cystine bridges form between cysteine 66–cysteine 76, cysteine 93–cysteine 188, and cysteine 164–cysteine 180. Positions 72-189 constitute a C-type lectin domain; that stretch reads IHKKCYLSFE…CRSLKKYICE (118 aa).

Its subcellular location is the secreted. This chain is C-type lectin domain family 3 member A homolog (clec3a), found in Xenopus laevis (African clawed frog).